We begin with the raw amino-acid sequence, 433 residues long: Serine--tRNA ligase (433 aa).

235 to 237 (TSE) serves as a coordination point for L-serine. Position 266–268 (266–268 (RSE)) interacts with ATP. Glutamate 289 contributes to the L-serine binding site. Position 353-356 (353-356 (EISS)) interacts with ATP. Serine 388 is a binding site for L-serine.

Belongs to the class-II aminoacyl-tRNA synthetase family. Type-1 seryl-tRNA synthetase subfamily. Homodimer. The tRNA molecule binds across the dimer.

The protein localises to the cytoplasm. The enzyme catalyses tRNA(Ser) + L-serine + ATP = L-seryl-tRNA(Ser) + AMP + diphosphate + H(+). It catalyses the reaction tRNA(Sec) + L-serine + ATP = L-seryl-tRNA(Sec) + AMP + diphosphate + H(+). The protein operates within aminoacyl-tRNA biosynthesis; selenocysteinyl-tRNA(Sec) biosynthesis; L-seryl-tRNA(Sec) from L-serine and tRNA(Sec): step 1/1. Catalyzes the attachment of serine to tRNA(Ser). Is also able to aminoacylate tRNA(Sec) with serine, to form the misacylated tRNA L-seryl-tRNA(Sec), which will be further converted into selenocysteinyl-tRNA(Sec). The polypeptide is Serine--tRNA ligase (Burkholderia cenocepacia (strain HI2424)).